Reading from the N-terminus, the 174-residue chain is N5-carboxyaminoimidazole ribonucleotide mutase (174 aa).

Positions 16, 19, and 46 each coordinate substrate.

Belongs to the AIR carboxylase family. Class I subfamily.

The catalysed reaction is 5-carboxyamino-1-(5-phospho-D-ribosyl)imidazole + H(+) = 5-amino-1-(5-phospho-D-ribosyl)imidazole-4-carboxylate. The protein operates within purine metabolism; IMP biosynthesis via de novo pathway; 5-amino-1-(5-phospho-D-ribosyl)imidazole-4-carboxylate from 5-amino-1-(5-phospho-D-ribosyl)imidazole (N5-CAIR route): step 2/2. In terms of biological role, catalyzes the conversion of N5-carboxyaminoimidazole ribonucleotide (N5-CAIR) to 4-carboxy-5-aminoimidazole ribonucleotide (CAIR). This chain is N5-carboxyaminoimidazole ribonucleotide mutase, found in Mycobacterium tuberculosis (strain CDC 1551 / Oshkosh).